The chain runs to 289 residues: ATP synthase gamma chain (289 aa).

It belongs to the ATPase gamma chain family. F-type ATPases have 2 components, CF(1) - the catalytic core - and CF(0) - the membrane proton channel. CF(1) has five subunits: alpha(3), beta(3), gamma(1), delta(1), epsilon(1). CF(0) has three main subunits: a, b and c.

The protein resides in the cell inner membrane. In terms of biological role, produces ATP from ADP in the presence of a proton gradient across the membrane. The gamma chain is believed to be important in regulating ATPase activity and the flow of protons through the CF(0) complex. In Polynucleobacter asymbioticus (strain DSM 18221 / CIP 109841 / QLW-P1DMWA-1) (Polynucleobacter necessarius subsp. asymbioticus), this protein is ATP synthase gamma chain.